Reading from the N-terminus, the 1068-residue chain is Receptor-like protein 13 (1068 aa).

Residues 1–23 (MEGKLFLGQYLICVILLLGQLHG) form the signal peptide. Residues 24-986 (YKSCIEKERK…EADESTVDME (963 aa)) are Extracellular-facing. Residues N59 and N97 are each glycosylated (N-linked (GlcNAc...) asparagine). 19 LRR repeats span residues 104 to 129 (FEDV…LFDD), 139 to 162 (LRNL…FLNA), 164 to 187 (TSLT…EFKD), 188 to 212 (LTNL…DYNS), 216 to 239 (FRKL…FLNS), 241 to 264 (TSLK…ELRD), 265 to 290 (LTNV…LFAL), 292 to 315 (KLKA…KFAK), 325 to 349 (WKNM…LTSL), 350 to 373 (TGLR…LANL), 375 to 397 (SLEY…LLAN), 398 to 423 (LSKL…SWKP), 424 to 447 (KFQL…LLHQ), 448 to 471 (KDLH…LLEN), 472 to 497 (NTKL…AHNL), 499 to 517 (FLNV…NFGW), 519 to 543 (LPHL…LDNM), 544 to 567 (KSIE…FLKG), and 569 to 594 (YNLT…NFTR). N-linked (GlcNAc...) asparagine glycosylation is present at N153. N202 carries an N-linked (GlcNAc...) asparagine glycan. Residue N279 is glycosylated (N-linked (GlcNAc...) asparagine). Residue N397 is glycosylated (N-linked (GlcNAc...) asparagine). 3 N-linked (GlcNAc...) asparagine glycosylation sites follow: N471, N482, and N501. Residues N570 and N591 are each glycosylated (N-linked (GlcNAc...) asparagine). The LRR 20; degenerate repeat unit spans residues 596-615 (WVMSMDNNLFTGNIGKGFRS). LRR repeat units follow at residues 616 to 639 (LPSL…WIGE), 641 to 664 (QGLF…LFNI), 665 to 688 (SYLQ…VSSI), 690 to 710 (HGAV…DTLL), and 711 to 734 (LNVI…INTQ). N663 is a glycosylation site (N-linked (GlcNAc...) asparagine). N700 carries N-linked (GlcNAc...) asparagine glycosylation. N-linked (GlcNAc...) asparagine glycans are attached at residues N735, N745, N771, N780, and N822. LRR repeat units follow at residues 736–757 (ISIL…FCSL) and 758–781 (SNIQ…LSNT). LRR repeat units follow at residues 846 to 870 (LKLL…LGGL), 871 to 893 (VELE…SFSG), 895 to 918 (KNVE…LTDM), and 920 to 943 (SLAV…QFNT). N-linked (GlcNAc...) asparagine glycans are attached at residues N877 and N882. Residues N925 and N930 are each glycosylated (N-linked (GlcNAc...) asparagine). The chain crosses the membrane as a helical span at residues 987–1007 (SFYWSFVAAYVTILLGILASL). Residues 1008 to 1068 (SFDSPWSRAW…PPALFHKTRT (61 aa)) lie on the Cytoplasmic side of the membrane.

The protein belongs to the RLP family.

It is found in the cell membrane. This Arabidopsis thaliana (Mouse-ear cress) protein is Receptor-like protein 13.